Consider the following 525-residue polypeptide: D-aminopeptidase (525 aa).

Ser62 acts as the Nucleophile in catalysis. The Proton donor/acceptor role is filled by Lys65. The interval 485-495 (PRALDHTAPGD) is important for specificity. A substrate-binding site is contributed by Asp489.

This sequence belongs to the peptidase S12 family. Homodimer.

The catalysed reaction is Release of an N-terminal D-amino acid from a peptide, Xaa-|-Yaa-, in which Xaa is preferably D-Ala, D-Ser or D-Thr. D-amino acid amides and methyl esters also are hydrolyzed, as is glycine amide.. Its activity is regulated as follows. Inhibited by beta-lactam compounds such as 6-aminopenicillic acid, 7-aminocephalosporanic acid, benzylpenicillin and ampicillin. Inhibited by p-chloromercuribenzoate. In terms of biological role, hydrolyzes N-terminal residues in D-amino acid-containing peptides. This is D-aminopeptidase from Gluconobacter oxydans (strain 621H) (Gluconobacter suboxydans).